Reading from the N-terminus, the 182-residue chain is Large ribosomal subunit protein bL25 (182 aa).

Belongs to the bacterial ribosomal protein bL25 family. CTC subfamily. Part of the 50S ribosomal subunit; part of the 5S rRNA/L5/L18/L25 subcomplex. Contacts the 5S rRNA. Binds to the 5S rRNA independently of L5 and L18.

Its function is as follows. This is one of the proteins that binds to the 5S RNA in the ribosome where it forms part of the central protuberance. The chain is Large ribosomal subunit protein bL25 from Borrelia garinii subsp. bavariensis (strain ATCC BAA-2496 / DSM 23469 / PBi) (Borreliella bavariensis).